A 351-amino-acid polypeptide reads, in one-letter code: Fe(3+) ions import ATP-binding protein FbpC (351 aa).

The ABC transporter domain occupies 7–237 (VVLKNVCKRF…PSSMFMANFM (231 aa)). 39–46 (GPSGCGKT) is a binding site for ATP.

Belongs to the ABC transporter superfamily. Fe(3+) ion importer (TC 3.A.1.10) family. In terms of assembly, the complex is composed of two ATP-binding proteins (FbpC), two transmembrane proteins (FbpB) and a solute-binding protein (FbpA).

It localises to the cell inner membrane. The enzyme catalyses Fe(3+)(out) + ATP + H2O = Fe(3+)(in) + ADP + phosphate + H(+). In terms of biological role, part of the ABC transporter complex FbpABC involved in Fe(3+) ions import. Responsible for energy coupling to the transport system. The polypeptide is Fe(3+) ions import ATP-binding protein FbpC (Photobacterium profundum (strain SS9)).